The primary structure comprises 197 residues: MFITFEGIDGSGKSTQIQLLAQYLEKRGKKVILKREPGGTETGEKIRKILLEEEVTPKAELFLFLASRNLLVTEIKQYLSEGYAVLLDRYTDSSVAYQGFGRNLGKEIVEELNDLATDGLIPDLTFYIDVDVETALKRKGELNRFEKREFLEHVREGYLVLAREHPERIVVLDGKRSIEEIHRDVVREVERRWKLDV.

7-14 is an ATP binding site; it reads GIDGSGKS.

The protein belongs to the thymidylate kinase family.

The enzyme catalyses dTMP + ATP = dTDP + ADP. Its function is as follows. Phosphorylation of dTMP to form dTDP in both de novo and salvage pathways of dTTP synthesis. This is Thymidylate kinase from Thermotoga sp. (strain RQ2).